Consider the following 333-residue polypeptide: UDP-N-acetylglucosamine--N-acetylmuramyl-(pentapeptide) pyrophosphoryl-undecaprenol N-acetylglucosamine transferase (333 aa).

UDP-N-acetyl-alpha-D-glucosamine-binding positions include 10–12 (TGG), Asn124, Ser177, and Gln275.

The protein belongs to the glycosyltransferase 28 family. MurG subfamily.

The protein localises to the cell inner membrane. The catalysed reaction is di-trans,octa-cis-undecaprenyl diphospho-N-acetyl-alpha-D-muramoyl-L-alanyl-D-glutamyl-meso-2,6-diaminopimeloyl-D-alanyl-D-alanine + UDP-N-acetyl-alpha-D-glucosamine = di-trans,octa-cis-undecaprenyl diphospho-[N-acetyl-alpha-D-glucosaminyl-(1-&gt;4)]-N-acetyl-alpha-D-muramoyl-L-alanyl-D-glutamyl-meso-2,6-diaminopimeloyl-D-alanyl-D-alanine + UDP + H(+). It functions in the pathway cell wall biogenesis; peptidoglycan biosynthesis. Cell wall formation. Catalyzes the transfer of a GlcNAc subunit on undecaprenyl-pyrophosphoryl-MurNAc-pentapeptide (lipid intermediate I) to form undecaprenyl-pyrophosphoryl-MurNAc-(pentapeptide)GlcNAc (lipid intermediate II). This Nitratiruptor sp. (strain SB155-2) protein is UDP-N-acetylglucosamine--N-acetylmuramyl-(pentapeptide) pyrophosphoryl-undecaprenol N-acetylglucosamine transferase.